The primary structure comprises 276 residues: Formamidopyrimidine-DNA glycosylase (276 aa).

Pro2 (schiff-base intermediate with DNA) is an active-site residue. Residue Glu3 is the Proton donor of the active site. The active-site Proton donor; for beta-elimination activity is Lys60. DNA contacts are provided by Arg113 and Arg152. An FPG-type zinc finger spans residues Asn241–Lys275. Arg265 serves as the catalytic Proton donor; for delta-elimination activity.

It belongs to the FPG family. Monomer. Requires Zn(2+) as cofactor.

It catalyses the reaction Hydrolysis of DNA containing ring-opened 7-methylguanine residues, releasing 2,6-diamino-4-hydroxy-5-(N-methyl)formamidopyrimidine.. The enzyme catalyses 2'-deoxyribonucleotide-(2'-deoxyribose 5'-phosphate)-2'-deoxyribonucleotide-DNA = a 3'-end 2'-deoxyribonucleotide-(2,3-dehydro-2,3-deoxyribose 5'-phosphate)-DNA + a 5'-end 5'-phospho-2'-deoxyribonucleoside-DNA + H(+). Functionally, involved in base excision repair of DNA damaged by oxidation or by mutagenic agents. Acts as a DNA glycosylase that recognizes and removes damaged bases. Has a preference for oxidized purines, such as 7,8-dihydro-8-oxoguanine (8-oxoG). Has AP (apurinic/apyrimidinic) lyase activity and introduces nicks in the DNA strand. Cleaves the DNA backbone by beta-delta elimination to generate a single-strand break at the site of the removed base with both 3'- and 5'-phosphates. The sequence is that of Formamidopyrimidine-DNA glycosylase from Protochlamydia amoebophila (strain UWE25).